A 492-amino-acid polypeptide reads, in one-letter code: Cell death protein 6 (492 aa).

The span at glycine 19 to serine 29 shows a compositional bias: low complexity. The segment at glycine 19–lysine 38 is disordered. One can recognise a PID domain in the interval isoleucine 55–leucine 215. Disordered stretches follow at residues threonine 241 to alanine 385 and threonine 464 to glutamine 492. Positions proline 244–proline 268 are enriched in pro residues. Positions alanine 300–serine 312 are enriched in low complexity. Positions glycine 313–alanine 333 are enriched in pro residues. A compositionally biased stretch (basic and acidic residues) spans phenylalanine 373–threonine 383.

It belongs to the ced-6 family. As to quaternary structure, homodimer. Interacts with ced-1. Interacts with E3 ubiquitin-protein ligase trim-21. As to expression, detected in gonadal sheath cells.

It is found in the cytoplasm. May function as an adapter protein in a pathway that mediates recognition and phagocytosis of apoptotic cells during normal development. Promotes engulfment of cells at both early and late stages of apoptosis. Required for actin reorganization around apoptotic cells. Plays a role in protecting dopaminergic neurons from oxidative stress-induced degeneration. Mediates recruitment of E3 ubiquitin-protein ligase trim-21 to the apoptotic cell surface which promotes ubiquitination and degradation of ced-1. The sequence is that of Cell death protein 6 from Caenorhabditis elegans.